Consider the following 145-residue polypeptide: Hemoglobin subunit beta-A (145 aa).

A Globin domain is found at 1–145 (MLTAEEKAAV…VANALAHRYH (145 aa)). Heme b is bound by residues His62 and His91.

It belongs to the globin family. Heterotetramer of two alpha chains and two beta chains. As to expression, red blood cells.

In terms of biological role, involved in oxygen transport from the lung to the various peripheral tissues. This Capra hircus (Goat) protein is Hemoglobin subunit beta-A.